The following is a 392-amino-acid chain: Quinolinate synthase (392 aa).

A disordered region spans residues 1–23 (MVDLPTTTPPAQPTTGNDEVDAL). The iminosuccinate site is built by histidine 57 and serine 74. Cysteine 131 provides a ligand contact to [4Fe-4S] cluster. Iminosuccinate-binding positions include 163 to 165 (YIN) and serine 184. Cysteine 254 lines the [4Fe-4S] cluster pocket. Iminosuccinate contacts are provided by residues 280–282 (HPE) and threonine 297. Cysteine 344 contributes to the [4Fe-4S] cluster binding site.

This sequence belongs to the quinolinate synthase family. Type 3 subfamily. The cofactor is [4Fe-4S] cluster.

It is found in the cytoplasm. The enzyme catalyses iminosuccinate + dihydroxyacetone phosphate = quinolinate + phosphate + 2 H2O + H(+). Its pathway is cofactor biosynthesis; NAD(+) biosynthesis; quinolinate from iminoaspartate: step 1/1. Catalyzes the condensation of iminoaspartate with dihydroxyacetone phosphate to form quinolinate. The chain is Quinolinate synthase from Rhodopirellula baltica (strain DSM 10527 / NCIMB 13988 / SH1).